The sequence spans 1036 residues: Serine/threonine-protein kinase ULK2 (1036 aa).

The 263-residue stretch at 9 to 271 folds into the Protein kinase domain; sequence YSKRDLVGHG…FEAFFSHPFL (263 aa). ATP-binding positions include 15–23 and Lys-39; that span reads VGHGAFAVV. Residue Asp-131 is the Proton acceptor of the active site. 5 disordered regions span residues 319–348, 418–460, 491–522, 540–588, and 656–695; these read ENLSSPPLGPPNYLQVSKDSASTSSKNSSC, TSTA…ADTA, CCCGHPQGHDSRSRNSSGSPVPQAQSPQSLLS, QKLR…SSDW, and AEQQSKAVFGRSVSTGKLSDQQGKTPICRHQGSTDSLNTE. The span at 335–348 shows a compositional bias: low complexity; sequence SKDSASTSSKNSSC. Residues 418–428 show a composition bias toward polar residues; sequence TSTASSGTNVH. Phosphoserine is present on Ser-430. Residues 504–521 are compositionally biased toward polar residues; it reads RNSSGSPVPQAQSPQSLL. Residues 659-679 are compositionally biased toward polar residues; sequence QSKAVFGRSVSTGKLSDQQGK. Phosphoserine occurs at positions 771 and 780. Residues 812 to 1036 form a CTD-like region region; it reads ELPEETLMER…SALCHSTATV (225 aa).

It belongs to the protein kinase superfamily. Ser/Thr protein kinase family. APG1/unc-51/ULK1 subfamily. Interacts with SYNGAP1. Component of a complex consisting of ATG13/KIAA0652, ULK1 and RB1CC1/FIP200. Interacts (via C-terminus) with ATG13/KIAA0652. Associates with the mammalian target of rapamycin complex 1 (mTORC1) through an interaction with RPTOR. Autophosphorylated. In response to nutrient limitation, probably phosphorylated and activated by AMPK, leading to activate autophagy.

It localises to the cytoplasmic vesicle membrane. The enzyme catalyses L-seryl-[protein] + ATP = O-phospho-L-seryl-[protein] + ADP + H(+). The catalysed reaction is L-threonyl-[protein] + ATP = O-phospho-L-threonyl-[protein] + ADP + H(+). In terms of biological role, serine/threonine-protein kinase involved in autophagy in response to starvation. Acts upstream of phosphatidylinositol 3-kinase PIK3C3 to regulate the formation of autophagophores, the precursors of autophagosomes. Part of regulatory feedback loops in autophagy: acts both as a downstream effector and a negative regulator of mammalian target of rapamycin complex 1 (mTORC1) via interaction with RPTOR. Activated via phosphorylation by AMPK, also acts as a negative regulator of AMPK through phosphorylation of the AMPK subunits PRKAA1, PRKAB2 and PRKAG1. May phosphorylate ATG13/KIAA0652, FRS2, FRS3 and RPTOR; however such data need additional evidences. Not involved in ammonia-induced autophagy or in autophagic response of cerebellar granule neurons (CGN) to low potassium concentration. Plays a role early in neuronal differentiation and is required for granule cell axon formation: may govern axon formation via Ras-like GTPase signaling and through regulation of the Rab5-mediated endocytic pathways within developing axons. The chain is Serine/threonine-protein kinase ULK2 (ULK2) from Homo sapiens (Human).